The sequence spans 212 residues: Imidazole glycerol phosphate synthase subunit HisH (212 aa).

The 212-residue stretch at 1–212 (MLAILDYKAG…YAYCKEASRA (212 aa)) folds into the Glutamine amidotransferase type-1 domain. C79 serves as the catalytic Nucleophile. Catalysis depends on residues H187 and E189.

In terms of assembly, heterodimer of HisH and HisF.

It localises to the cytoplasm. The catalysed reaction is 5-[(5-phospho-1-deoxy-D-ribulos-1-ylimino)methylamino]-1-(5-phospho-beta-D-ribosyl)imidazole-4-carboxamide + L-glutamine = D-erythro-1-(imidazol-4-yl)glycerol 3-phosphate + 5-amino-1-(5-phospho-beta-D-ribosyl)imidazole-4-carboxamide + L-glutamate + H(+). It carries out the reaction L-glutamine + H2O = L-glutamate + NH4(+). The protein operates within amino-acid biosynthesis; L-histidine biosynthesis; L-histidine from 5-phospho-alpha-D-ribose 1-diphosphate: step 5/9. In terms of biological role, IGPS catalyzes the conversion of PRFAR and glutamine to IGP, AICAR and glutamate. The HisH subunit catalyzes the hydrolysis of glutamine to glutamate and ammonia as part of the synthesis of IGP and AICAR. The resulting ammonia molecule is channeled to the active site of HisF. This is Imidazole glycerol phosphate synthase subunit HisH from Nitratidesulfovibrio vulgaris (strain DSM 19637 / Miyazaki F) (Desulfovibrio vulgaris).